The following is a 516-amino-acid chain: uncharacterized protein (516 aa).

PFTB repeat units follow at residues Arg45–Asp86 and Asp401–Glu443.

This is an uncharacterized protein from Bradyrhizobium diazoefficiens (strain JCM 10833 / BCRC 13528 / IAM 13628 / NBRC 14792 / USDA 110).